The following is a 141-amino-acid chain: Hemoglobin subunit alpha (141 aa).

A Globin domain is found at 1-141; it reads VLSPADKSNV…VSTVLTSKYR (141 aa). A Phosphoserine modification is found at S3. An N6-succinyllysine mark is found at K7 and K11. K16 is subject to N6-acetyllysine; alternate. K16 is modified (N6-succinyllysine; alternate). Residue Y24 is modified to Phosphotyrosine. Residue S35 is modified to Phosphoserine. K40 carries the N6-succinyllysine modification. Residue S49 is modified to Phosphoserine. H58 contacts O2. H87 lines the heme b pocket. Position 102 is a phosphoserine (S102). At T108 the chain carries Phosphothreonine. Residues S124 and S131 each carry the phosphoserine modification. Residues T134 and T137 each carry the phosphothreonine modification. S138 carries the phosphoserine modification.

Belongs to the globin family. In terms of assembly, heterotetramer of two alpha chains and two beta chains. In terms of tissue distribution, red blood cells.

Its function is as follows. Involved in oxygen transport from the lung to the various peripheral tissues. In terms of biological role, hemopressin acts as an antagonist peptide of the cannabinoid receptor CNR1. Hemopressin-binding efficiently blocks cannabinoid receptor CNR1 and subsequent signaling. The chain is Hemoglobin subunit alpha (HBA) from Saguinus mystax (Moustached tamarin).